The following is a 164-amino-acid chain: S-ribosylhomocysteine lyase (164 aa).

Fe cation-binding residues include histidine 54, histidine 58, and cysteine 128.

This sequence belongs to the LuxS family. Homodimer. Requires Fe cation as cofactor.

The enzyme catalyses S-(5-deoxy-D-ribos-5-yl)-L-homocysteine = (S)-4,5-dihydroxypentane-2,3-dione + L-homocysteine. In terms of biological role, involved in the synthesis of autoinducer 2 (AI-2) which is secreted by bacteria and is used to communicate both the cell density and the metabolic potential of the environment. The regulation of gene expression in response to changes in cell density is called quorum sensing. Catalyzes the transformation of S-ribosylhomocysteine (RHC) to homocysteine (HC) and 4,5-dihydroxy-2,3-pentadione (DPD). This is S-ribosylhomocysteine lyase from Campylobacter jejuni subsp. doylei (strain ATCC BAA-1458 / RM4099 / 269.97).